Consider the following 158-residue polypeptide: Ribonuclease H (158 aa).

Residues 2–143 (PEKIIELFTD…VDALLNRVMD (142 aa)) form the RNase H type-1 domain. Residues aspartate 11, glutamate 49, aspartate 71, and aspartate 135 each coordinate Mg(2+).

The protein belongs to the RNase H family. Monomer. Mg(2+) serves as cofactor.

The protein localises to the cytoplasm. It carries out the reaction Endonucleolytic cleavage to 5'-phosphomonoester.. Its function is as follows. Endonuclease that specifically degrades the RNA of RNA-DNA hybrids. This is Ribonuclease H from Acidithiobacillus ferrooxidans (strain ATCC 23270 / DSM 14882 / CIP 104768 / NCIMB 8455) (Ferrobacillus ferrooxidans (strain ATCC 23270)).